Consider the following 310-residue polypeptide: Pantothenate kinase (310 aa).

ATP is bound at residue 95–102; the sequence is GSVAVGKS.

Belongs to the prokaryotic pantothenate kinase family.

The protein localises to the cytoplasm. The catalysed reaction is (R)-pantothenate + ATP = (R)-4'-phosphopantothenate + ADP + H(+). It participates in cofactor biosynthesis; coenzyme A biosynthesis; CoA from (R)-pantothenate: step 1/5. The protein is Pantothenate kinase of Rhodococcus erythropolis (strain PR4 / NBRC 100887).